The primary structure comprises 205 residues: Methylthioribulose-1-phosphate dehydratase (205 aa).

Positions 96 and 98 each coordinate Zn(2+).

This sequence belongs to the aldolase class II family. MtnB subfamily. Zn(2+) serves as cofactor.

The catalysed reaction is 5-(methylsulfanyl)-D-ribulose 1-phosphate = 5-methylsulfanyl-2,3-dioxopentyl phosphate + H2O. Its pathway is amino-acid biosynthesis; L-methionine biosynthesis via salvage pathway; L-methionine from S-methyl-5-thio-alpha-D-ribose 1-phosphate: step 2/6. Catalyzes the dehydration of methylthioribulose-1-phosphate (MTRu-1-P) into 2,3-diketo-5-methylthiopentyl-1-phosphate (DK-MTP-1-P). The polypeptide is Methylthioribulose-1-phosphate dehydratase (Pseudomonas aeruginosa (strain LESB58)).